Consider the following 470-residue polypeptide: NADH-quinone oxidoreductase subunit D (470 aa).

A compositionally biased stretch (low complexity) spans 1 to 18 (MTPSTSTPHTSTAPHTST). Residues 1–37 (MTPSTSTPHTSTAPHTSTGQSTDGAAQPGDGSSAYEA) form a disordered region.

This sequence belongs to the complex I 49 kDa subunit family. NDH-1 is composed of 14 different subunits. Subunits NuoB, C, D, E, F, and G constitute the peripheral sector of the complex.

It is found in the cell membrane. The catalysed reaction is a quinone + NADH + 5 H(+)(in) = a quinol + NAD(+) + 4 H(+)(out). Functionally, NDH-1 shuttles electrons from NADH, via FMN and iron-sulfur (Fe-S) centers, to quinones in the respiratory chain. The immediate electron acceptor for the enzyme in this species is believed to be a menaquinone. Couples the redox reaction to proton translocation (for every two electrons transferred, four hydrogen ions are translocated across the cytoplasmic membrane), and thus conserves the redox energy in a proton gradient. This Frankia alni (strain DSM 45986 / CECT 9034 / ACN14a) protein is NADH-quinone oxidoreductase subunit D.